The following is a 1076-amino-acid chain: Zinc-regulated protein 8 (1076 aa).

Over residues 1-11 (MRSFIKAHKKS) the composition is skewed to basic residues. Disordered regions lie at residues 1 to 66 (MRSF…PGFE), 85 to 162 (SNLN…RTTD), 190 to 223 (PASPASNTSEATSSKQFKTPIIGNENLTSTTSPS), and 234 to 253 (KNKGKQQENIDDAEDGSSKK). The segment covering 23–34 (NFSGNTNNSSQR) has biased composition (polar residues). A compositionally biased stretch (low complexity) spans 93–106 (STPTTSTNQTTSNS). Polar residues predominate over residues 107-117 (FVLQNPPTKNT). Pro residues predominate over residues 118–128 (GPPPPLPPPLF). Composition is skewed to polar residues over residues 193 to 206 (PASNTSEATSSKQF) and 214 to 223 (ENLTSTTSPS). A phosphoserine mark is found at serine 275 and serine 354. 3 disordered regions span residues 357 to 450 (IRHG…DDES), 534 to 557 (LSDDDEEEDGKDNSNNGDENESDN), and 566 to 585 (GKETFNGNHGGHHDDASLGE). Over residues 362-378 (LQSSPSKVNKNDSQNET) the composition is skewed to polar residues. Phosphoserine occurs at positions 403 and 407. Over residues 408–418 (VNEKETHKAND) the composition is skewed to basic and acidic residues. Residues 419-450 (CNDESSENGDGDNDHDDDYDDDDDDDDDDDES) show a composition bias toward acidic residues. The segment covering 576-585 (GHHDDASLGE) has biased composition (basic and acidic residues). Serine 632 and serine 676 each carry phosphoserine. 5 disordered regions span residues 658 to 701 (NIIR…KPTV), 713 to 762 (SASD…PHSQ), 909 to 931 (RRTLKSPLRGGSKNREVSPFSSV), 1000 to 1020 (HNVGQNVEPSSVLSPQHQISN), and 1042 to 1076 (PTNSFTKPTPEFSNDYSLSPIQETPSSVQSSPKRA). Polar residues-rich tracts occupy residues 690-701 (LTGTTGSTKPTV) and 739-748 (QVSLQSSLYE).

Belongs to the ZRG8 family. In terms of assembly, interacts with BUD27, GIS1 and SSD1.

It is found in the cytoplasm. Its subcellular location is the bud. The protein resides in the bud neck. It localises to the bud tip. Involved in the integrity functions of RAM, a conserved signaling network that regulates maintenance of polarized growth and daughter-cell-specific transcription. This is Zinc-regulated protein 8 (ZRG8) from Saccharomyces cerevisiae (strain ATCC 204508 / S288c) (Baker's yeast).